Consider the following 295-residue polypeptide: Acetylglutamate kinase (295 aa).

Substrate contacts are provided by residues 61-62 (GG), Arg-83, and Asn-187.

It belongs to the acetylglutamate kinase family. ArgB subfamily.

Its subcellular location is the cytoplasm. The catalysed reaction is N-acetyl-L-glutamate + ATP = N-acetyl-L-glutamyl 5-phosphate + ADP. The protein operates within amino-acid biosynthesis; L-arginine biosynthesis; N(2)-acetyl-L-ornithine from L-glutamate: step 2/4. Catalyzes the ATP-dependent phosphorylation of N-acetyl-L-glutamate. The protein is Acetylglutamate kinase of Methanocorpusculum labreanum (strain ATCC 43576 / DSM 4855 / Z).